Here is a 95-residue protein sequence, read N- to C-terminus: Large ribosomal subunit protein uL23c (95 aa).

Belongs to the universal ribosomal protein uL23 family. Part of the 50S ribosomal subunit.

The protein localises to the plastid. It localises to the chloroplast. Functionally, binds to 23S rRNA. The polypeptide is Large ribosomal subunit protein uL23c (rpl23) (Chlamydomonas reinhardtii (Chlamydomonas smithii)).